Consider the following 356-residue polypeptide: 5-amino-6-(D-ribitylamino)uracil--L-tyrosine 4-hydroxyphenyl transferase (356 aa).

In terms of domain architecture, Radical SAM core spans 47-281 (VTYIVNRNIN…AIARILLNTH (235 aa)). 3 residues coordinate [4Fe-4S] cluster: Cys61, Cys65, and Cys68.

It belongs to the radical SAM superfamily. CofH family. Consists of two subunits, CofG and CofH. [4Fe-4S] cluster serves as cofactor.

It carries out the reaction 5-amino-6-(D-ribitylamino)uracil + L-tyrosine + S-adenosyl-L-methionine = 5-amino-5-(4-hydroxybenzyl)-6-(D-ribitylimino)-5,6-dihydrouracil + 2-iminoacetate + 5'-deoxyadenosine + L-methionine + H(+). It participates in cofactor biosynthesis; coenzyme F0 biosynthesis. Catalyzes the radical-mediated synthesis of 5-amino-5-(4-hydroxybenzyl)-6-(D-ribitylimino)-5,6-dihydrouracil from 5-amino-6-(D-ribitylamino)uracil and L-tyrosine. This chain is 5-amino-6-(D-ribitylamino)uracil--L-tyrosine 4-hydroxyphenyl transferase, found in Methanococcoides burtonii (strain DSM 6242 / NBRC 107633 / OCM 468 / ACE-M).